Reading from the N-terminus, the 144-residue chain is Large ribosomal subunit protein uL16 (144 aa).

It belongs to the universal ribosomal protein uL16 family. In terms of assembly, part of the 50S ribosomal subunit.

In terms of biological role, binds 23S rRNA and is also seen to make contacts with the A and possibly P site tRNAs. The protein is Large ribosomal subunit protein uL16 of Clostridium botulinum (strain Alaska E43 / Type E3).